A 589-amino-acid chain; its full sequence is Protein sprouty (589 aa).

Disordered regions lie at residues Met1–His37, Arg102–Ser194, and Leu239–Gly320. Composition is skewed to low complexity over residues Ser104–Ser135 and Asn148–Asn162. Over residues Phe163–Pro172 the composition is skewed to polar residues. The segment covering Leu239–His272 has biased composition (low complexity). Residues Ala276–Ser286 show a composition bias toward polar residues. The SPR domain occupies Arg380–Cys499.

The protein belongs to the sprouty family. As to quaternary structure, interacts with DRK and RasGAP1 proteins of the Ras pathway. In ovary, expressed from stage 7 of oogenesis in the posterior follicle cells and during stage 9 when the follicle cells migrate posteriorly over the oocyte nucleus, expression is seen in the dorsal and lateral cells and is excluded from the ventral cells. Once the migration of follicle cells is complete expressed in the dorsal-anterior corner of the egg chamber. Expressed in the embryonic tracheal system, developing eye imaginal disk, embryonic chordotonal organ precursors, midline glia and wing imaginal disk.

It localises to the cell membrane. In terms of biological role, inhibitor of tracheal branching that restricts branch budding by antagonizing the BNL-FGF pathway (BNL: branchless, an fgf inducer of branching). Acts as an antagonist of EGFR-mediated signaling in the eye (where it is important for cell determination) midline glia, chordotonal organs, wing and ovarian follicle cells. The protein is Protein sprouty (sty) of Drosophila melanogaster (Fruit fly).